The following is a 196-amino-acid chain: Glycerol-3-phosphate acyltransferase (196 aa).

5 consecutive transmembrane segments (helical) span residues 1 to 21 (MIIF…SISG), 55 to 75 (IAIF…WLGT), 81 to 101 (PIYL…PIYF), 118 to 138 (AISI…VYLF), and 140 to 160 (YASL…WYIQ).

The protein belongs to the PlsY family. As to quaternary structure, probably interacts with PlsX.

It localises to the cell inner membrane. It carries out the reaction an acyl phosphate + sn-glycerol 3-phosphate = a 1-acyl-sn-glycero-3-phosphate + phosphate. Its pathway is lipid metabolism; phospholipid metabolism. Functionally, catalyzes the transfer of an acyl group from acyl-phosphate (acyl-PO(4)) to glycerol-3-phosphate (G3P) to form lysophosphatidic acid (LPA). This enzyme utilizes acyl-phosphate as fatty acyl donor, but not acyl-CoA or acyl-ACP. The protein is Glycerol-3-phosphate acyltransferase of Blochmanniella floridana.